The sequence spans 109 residues: Ig kappa chain V region S211 (109 aa).

Positions 1-23 (DVQMTQSPSYLAASPGESVSISC) are framework-1. The segment at 24–35 (KASNKSISNNLA) is complementarity-determining-1. A framework-2 region spans residues 36 to 50 (WYZZKPGKANKLLIS). The interval 51 to 57 (SGSTLQS) is complementarity-determining-2. Residues 58 to 89 (GTPSRFSGSGSDTDFTLTIRSLEFQDFAVYYC) form a framework-3 region. A complementarity-determining-3 region spans residues 90–98 (ZZYNEPYYT). The interval 99–108 (FGAGTMLELK) is framework-4.

The sequence is that of Ig kappa chain V region S211 from Rattus norvegicus (Rat).